The sequence spans 156 residues: 6,7-dimethyl-8-ribityllumazine synthase (156 aa).

5-amino-6-(D-ribitylamino)uracil is bound by residues F22, 57 to 59, and 81 to 83; these read AYE and TVI. Residue 86-87 participates in (2S)-2-hydroxy-3-oxobutyl phosphate binding; sequence GT. H89 (proton donor) is an active-site residue. F114 provides a ligand contact to 5-amino-6-(D-ribitylamino)uracil. R128 serves as a coordination point for (2S)-2-hydroxy-3-oxobutyl phosphate.

This sequence belongs to the DMRL synthase family. As to quaternary structure, forms an icosahedral capsid composed of 60 subunits, arranged as a dodecamer of pentamers.

It catalyses the reaction (2S)-2-hydroxy-3-oxobutyl phosphate + 5-amino-6-(D-ribitylamino)uracil = 6,7-dimethyl-8-(1-D-ribityl)lumazine + phosphate + 2 H2O + H(+). Its pathway is cofactor biosynthesis; riboflavin biosynthesis; riboflavin from 2-hydroxy-3-oxobutyl phosphate and 5-amino-6-(D-ribitylamino)uracil: step 1/2. Catalyzes the formation of 6,7-dimethyl-8-ribityllumazine by condensation of 5-amino-6-(D-ribitylamino)uracil with 3,4-dihydroxy-2-butanone 4-phosphate. This is the penultimate step in the biosynthesis of riboflavin. The sequence is that of 6,7-dimethyl-8-ribityllumazine synthase from Yersinia enterocolitica serotype O:8 / biotype 1B (strain NCTC 13174 / 8081).